The chain runs to 357 residues: Naringenin,2-oxoglutarate 3-dioxygenase (357 aa).

The region spanning cysteine 189–proline 293 is the Fe2OG dioxygenase domain. Residues histidine 216, aspartate 218, and histidine 274 each contribute to the Fe cation site. Position 284 (arginine 284) interacts with 2-oxoglutarate.

It belongs to the iron/ascorbate-dependent oxidoreductase family. Fe(2+) serves as cofactor. Requires L-ascorbate as cofactor.

The catalysed reaction is a (2S)-flavan-4-one + 2-oxoglutarate + O2 = a (2R,3R)-dihydroflavonol + succinate + CO2. It participates in secondary metabolite biosynthesis; flavonoid biosynthesis. Catalyzes the 3-beta-hydroxylation of 2S-flavanones to 2R,3R-dihydroflavonols which are intermediates in the biosynthesis of flavonols, anthocyanidins, catechins and proanthocyanidins in plants. The chain is Naringenin,2-oxoglutarate 3-dioxygenase (FHT) from Matthiola incana (Common stock).